Here is a 251-residue protein sequence, read N- to C-terminus: Retinoic acid early-inducible protein 1-epsilon (251 aa).

Residues methionine 1–glycine 28 form the signal peptide. Cysteine 37 and cysteine 56 form a disulfide bridge. N-linked (GlcNAc...) asparagine glycans are attached at residues asparagine 38, asparagine 70, asparagine 83, asparagine 141, and asparagine 154. A disulfide bond links cysteine 88 and cysteine 188. The disordered stretch occupies residues leucine 196–threonine 228. Residues serine 209–serine 219 show a composition bias toward low complexity. Serine 225 carries GPI-anchor amidated serine lipidation. Positions histidine 226–methionine 251 are cleaved as a propeptide — removed in mature form.

The protein belongs to the NKG2D ligand family. Glycosylated.

The protein resides in the cell membrane. Acts as a ligand for KLRK1. The chain is Retinoic acid early-inducible protein 1-epsilon (Raet1e) from Mus musculus (Mouse).